We begin with the raw amino-acid sequence, 625 residues long: Cysteine-rich receptor-like protein kinase 46 (625 aa).

Positions 1-23 are cleaved as a signal peptide; that stretch reads MASTLISSLAVVLPLTLLAPSMS. Topologically, residues 24 to 252 are extracellular; sequence MKISRIDVLG…LLAMSFTKEN (229 aa). Gnk2-homologous domains lie at 29-130 and 135-237; these read IDVL…NYSF and VSHQ…NYTF. 4 N-linked (GlcNAc...) asparagine glycosylation sites follow: Asn38, Asn127, Asn234, and Asn252. Residues 253 to 273 form a helical membrane-spanning segment; the sequence is LTYIFVISMVGVLAIAAGFWC. Over 274–625 the chain is Cytoplasmic; sequence GKCFYMRTSP…TKPPFLHDSM (352 aa). Residues 331-621 enclose the Protein kinase domain; the sequence is FNESCKLGVG…LPTPTKPPFL (291 aa). Residues 337–345 and Lys359 contribute to the ATP site; that span reads LGVGGYGEV. Tyr404 carries the post-translational modification Phosphotyrosine. The active-site Proton acceptor is the Asp454. Ser458 is subject to Phosphoserine. Position 499 is a phosphothreonine (Thr499). Tyr507 carries the phosphotyrosine modification.

Belongs to the protein kinase superfamily. Ser/Thr protein kinase family. CRK subfamily.

The protein localises to the membrane. The catalysed reaction is L-seryl-[protein] + ATP = O-phospho-L-seryl-[protein] + ADP + H(+). The enzyme catalyses L-threonyl-[protein] + ATP = O-phospho-L-threonyl-[protein] + ADP + H(+). This chain is Cysteine-rich receptor-like protein kinase 46, found in Arabidopsis thaliana (Mouse-ear cress).